The primary structure comprises 620 residues: Dihydroxy-acid dehydratase (620 aa).

Aspartate 82 contacts Mg(2+). Residue cysteine 123 participates in [2Fe-2S] cluster binding. Residues aspartate 124 and lysine 125 each coordinate Mg(2+). Position 125 is an N6-carboxylysine (lysine 125). Cysteine 197 contacts [2Fe-2S] cluster. A Mg(2+)-binding site is contributed by glutamate 493. Serine 519 serves as the catalytic Proton acceptor.

This sequence belongs to the IlvD/Edd family. In terms of assembly, homodimer. It depends on [2Fe-2S] cluster as a cofactor. Mg(2+) is required as a cofactor.

The enzyme catalyses (2R)-2,3-dihydroxy-3-methylbutanoate = 3-methyl-2-oxobutanoate + H2O. It carries out the reaction (2R,3R)-2,3-dihydroxy-3-methylpentanoate = (S)-3-methyl-2-oxopentanoate + H2O. The protein operates within amino-acid biosynthesis; L-isoleucine biosynthesis; L-isoleucine from 2-oxobutanoate: step 3/4. Its pathway is amino-acid biosynthesis; L-valine biosynthesis; L-valine from pyruvate: step 3/4. In terms of biological role, functions in the biosynthesis of branched-chain amino acids. Catalyzes the dehydration of (2R,3R)-2,3-dihydroxy-3-methylpentanoate (2,3-dihydroxy-3-methylvalerate) into 2-oxo-3-methylpentanoate (2-oxo-3-methylvalerate) and of (2R)-2,3-dihydroxy-3-methylbutanoate (2,3-dihydroxyisovalerate) into 2-oxo-3-methylbutanoate (2-oxoisovalerate), the penultimate precursor to L-isoleucine and L-valine, respectively. This Bifidobacterium longum (strain NCC 2705) protein is Dihydroxy-acid dehydratase.